The primary structure comprises 27 residues: Small integral membrane protein 43 (27 aa).

Residues His15–Phe21 form an important for interaction with SLC2A1 and SLC2A3 region.

Interacts with glucose transporters SLC2A1/GLUT1 and SLC2A3/GLUT3; the interactions may promote SLC2A1- and SLC2A3-mediated glucose transport to meet the energy needs of mesendoderm differentiation.

It is found in the cell membrane. Functionally, required for mesendoderm differentiation. Interacts with glucose transporters and promotes glucose uptake. Probably augments the glucose uptake capacity of glucose transporter proteins to meet the energy needs of mesendoderm differentiation. This is Small integral membrane protein 43 from Pongo abelii (Sumatran orangutan).